The following is a 410-amino-acid chain: Transcription factor Dp-1 (410 aa).

Residue Lys3 is modified to N6-acetyllysine. A Phosphoserine; by CDK2 modification is found at Ser23. The tract at residues 77 to 114 (VVGSPHTPNTHFVSQNQPSDPSPWSAGKRNRKGEKNGK) is disordered. Over residues 82–95 (HTPNTHFVSQNQPS) the composition is skewed to polar residues. Residues 104–114 (KRNRKGEKNGK) show a composition bias toward basic residues. Residues 105–127 (RNRKGEKNGKGLRHFSMKVCEKV) are interaction with CEBPA. A DNA-binding region spans residues 113-195 (GKGLRHFSMK…KKEIKWIGLP (83 aa)). The DEF box signature appears at 161–195 (DQKNIRRRVYDALNVLMAMNIISKEKKEIKWIGLP). Residues 204–277 (SLEVERQRRL…KKTVIDCSIS (74 aa)) form a dimerization region. Residues 211–327 (RRLERIKQKQ…DLRVARSLVP (117 aa)) form an enhances binding of RB protein to E2F region. The interval 214 to 246 (ERIKQKQSQLQELILQQIAFKNLVQRNRQVEQQ) is DCB1. Residues 259–315 (LPFIIVNTSKKTVIDCSISNDKFEYLFNFDNTFEIHDDIEVLKRMGMACGLESGSCS) form a DCB2 region. Residues 370–410 (GALATSSSGSQYSGSRVETPVSCVGEDDEDDEDFNENEEED) form a disordered region. The segment covering 375–384 (SSSGSQYSGS) has biased composition (low complexity). A compositionally biased stretch (acidic residues) spans 394-410 (GEDDEDDEDFNENEEED).

This sequence belongs to the E2F/DP family. As to quaternary structure, component of the E2F:DP transcription factor complex. Forms heterodimers with E2F family members. The complex can interact with hypophosphorylated retinoblastoma protein RB1 and related proteins (RBL1 and RBL2) that inhibit the E2F transactivation domain. This repression involves recruitment of histone deacetylase (HDAC). During the cell cycle, from mid-to-late G1 phase, RB family members become phosphorylated, detach from the DRTF1/E2F complex to render E2F transcriptionally active. Part of the E2F6.com-1 complex in G0 phase is composed of E2F6, MGA, MAX, TFDP1, CBX3, BAT8, EUHMTASE1, RING1, RNF2, MBLR, L3MBTL2 YAF2. Component of the DREAM complex (also named LINC complex) at least composed of E2F4, E2F5, LIN9, LIN37, LIN52, LIN54, MYBL1, MYBL2, RBL1, RBL2, RBBP4, TFDP1 and TFDP2. The complex exists in quiescent cells where it represses cell cycle-dependent genes. It dissociates in S phase when LIN9, LIN37, LIN52 and LIN54 form a subcomplex that binds to MYBL2. The complex TFDP1:E2F1 interacts with CEBPA; the interaction prevents CEBPA binding to target gene promoters and represses its transcriptional activity. Ubiquitinated by the BCR(KBTBD5) complex, leading to its subsequent degradation. Post-translationally, phosphorylation by E2F1-bound cyclin A-CDK2, in the S phase, inhibits E2F-mediated DNA binding and transactivation.

The protein resides in the nucleus. The protein localises to the cytoplasm. Can stimulate E2F-dependent transcription. Binds DNA cooperatively with E2F family members through the E2 recognition site, 5'-TTTC[CG]CGC-3', found in the promoter region of a number of genes whose products are involved in cell cycle regulation or in DNA replication. The E2F1:DP complex appears to mediate both cell proliferation and apoptosis. Blocks adipocyte differentiation by repressing CEBPA binding to its target gene promoters. In Bos taurus (Bovine), this protein is Transcription factor Dp-1 (TFDP1).